The primary structure comprises 24 residues: Brevinin-1La (24 aa).

A disulfide bond links cysteine 18 and cysteine 24.

As to expression, expressed by the skin glands.

The protein localises to the secreted. Its function is as follows. Antibacterial activity against Gram-positive bacterium S.aureus and Gram-negative bacterium E.coli. The polypeptide is Brevinin-1La (Rana luteiventris (Columbia spotted frog)).